The primary structure comprises 54 residues: Metallothionein-4 (54 aa).

It belongs to the metallothionein superfamily. Type 11 family.

This chain is Metallothionein-4 (MTP4), found in Yarrowia lipolytica (strain CLIB 122 / E 150) (Yeast).